The chain runs to 183 residues: Deoxyuridine 5'-triphosphate nucleotidohydrolase (183 aa).

Residues 67–69 (RSG), Asn80, 84–86 (TID), and Lys94 contribute to the substrate site. Residues 138–183 (RAEGGFGSTGGHAGLDPASGTSGQVAEGGPTGGNRYASVVSDREGQ) are disordered. Residues 141–150 (GGFGSTGGHA) are compositionally biased toward gly residues.

This sequence belongs to the dUTPase family. The cofactor is Mg(2+).

The catalysed reaction is dUTP + H2O = dUMP + diphosphate + H(+). Its pathway is pyrimidine metabolism; dUMP biosynthesis; dUMP from dCTP (dUTP route): step 2/2. Its function is as follows. This enzyme is involved in nucleotide metabolism: it produces dUMP, the immediate precursor of thymidine nucleotides and it decreases the intracellular concentration of dUTP so that uracil cannot be incorporated into DNA. The sequence is that of Deoxyuridine 5'-triphosphate nucleotidohydrolase from Streptomyces coelicolor (strain ATCC BAA-471 / A3(2) / M145).